Consider the following 700-residue polypeptide: Serine/threonine-protein kinase WNK1 (700 aa).

In terms of domain architecture, Protein kinase spans 24-281; that stretch reads GRYNEVLGKG…ARELLDDPFL (258 aa). ATP is bound by residues 104–107 and Lys-154; that span reads TELF. Residue Asp-171 is the Proton acceptor of the active site. The segment covering 314–339 has biased composition (low complexity); it reads NYPSNSSSLNRQYSNGNYPSNSSSLN. Disordered regions lie at residues 314–345, 551–575, and 647–666; these read NYPS…YSNG, ESRE…EVLY, and ESGE…SVSG. Basic and acidic residues predominate over residues 551–565; that stretch reads ESRELSSIDSGHNHS. Positions 566 to 575 are enriched in acidic residues; that stretch reads EEEEEEEVLY.

Belongs to the protein kinase superfamily. Ser/Thr protein kinase family. WNK subfamily. Autophosphorylated.

The catalysed reaction is L-seryl-[protein] + ATP = O-phospho-L-seryl-[protein] + ADP + H(+). It catalyses the reaction L-threonyl-[protein] + ATP = O-phospho-L-threonyl-[protein] + ADP + H(+). In terms of biological role, regulates flowering time by modulating the photoperiod pathway. Phosphorylates APRR3. This chain is Serine/threonine-protein kinase WNK1 (WNK1), found in Arabidopsis thaliana (Mouse-ear cress).